Reading from the N-terminus, the 216-residue chain is Sperm microtubule inner protein 8 (216 aa).

In terms of assembly, microtubule inner protein component of sperm flagellar doublet microtubules.

The protein localises to the cytoplasm. Its subcellular location is the cytoskeleton. It localises to the flagellum axoneme. Its function is as follows. Microtubule inner protein (MIP) part of the dynein-decorated doublet microtubules (DMTs) in flagellum axoneme. May serve to reinforce and thus stabilize the microtubule structure in the sperm flagella. The polypeptide is Sperm microtubule inner protein 8 (Spmip8) (Rattus norvegicus (Rat)).